Reading from the N-terminus, the 173-residue chain is Translocon-associated protein subunit delta (173 aa).

The signal sequence occupies residues 1 to 23 (MAAMASFGALALLLLSGLSCCSA). Residues 24–144 (EACLEPQITP…SVDHRGTWNG (121 aa)) lie on the Lumenal side of the membrane. Cysteines 26 and 57 form a disulfide. Lys73 is covalently cross-linked (Glycyl lysine isopeptide (Lys-Gly) (interchain with G-Cter in ubiquitin)). Residues 145-165 (PWVSTEVLAAAIGIVIYYLAF) form a helical membrane-spanning segment. The Cytoplasmic segment spans residues 166–173 (SAKSHIQA).

Belongs to the TRAP-delta family. As to quaternary structure, heterotetramer of TRAP-alpha, TRAP-beta, TRAP-delta and TRAP-gamma.

Its subcellular location is the endoplasmic reticulum membrane. Functionally, TRAP proteins are part of a complex whose function is to bind calcium to the ER membrane and thereby regulate the retention of ER resident proteins. The chain is Translocon-associated protein subunit delta (Ssr4) from Rattus norvegicus (Rat).